The sequence spans 354 residues: Glycerol-1-phosphate dehydrogenase [NAD(P)+] (354 aa).

NAD(+) contacts are provided by residues 103 to 107 (GRSVD) and 125 to 128 (TAAS). D130 lines the substrate pocket. S134 is an NAD(+) binding site. D176 serves as a coordination point for substrate. The Zn(2+) site is built by D176 and H255. H259 contributes to the substrate binding site. Residue H271 coordinates Zn(2+).

This sequence belongs to the glycerol-1-phosphate dehydrogenase family. In terms of assembly, homodimer. Zn(2+) serves as cofactor.

It is found in the cytoplasm. It carries out the reaction sn-glycerol 1-phosphate + NAD(+) = dihydroxyacetone phosphate + NADH + H(+). The catalysed reaction is sn-glycerol 1-phosphate + NADP(+) = dihydroxyacetone phosphate + NADPH + H(+). It participates in membrane lipid metabolism; glycerophospholipid metabolism. In terms of biological role, catalyzes the NAD(P)H-dependent reduction of dihydroxyacetonephosphate (DHAP or glycerone phosphate) to glycerol 1-phosphate (G1P). The G1P thus generated is used as the glycerophosphate backbone of phospholipids in the cellular membranes of Archaea. The chain is Glycerol-1-phosphate dehydrogenase [NAD(P)+] from Nitrosopumilus maritimus (strain SCM1).